The chain runs to 64 residues: Large ribosomal subunit protein bL35 (64 aa).

The disordered stretch occupies residues 1–64; the sequence is MPKNKTNSGA…RKSIKKLLGK (64 aa).

It belongs to the bacterial ribosomal protein bL35 family.

The polypeptide is Large ribosomal subunit protein bL35 (Beutenbergia cavernae (strain ATCC BAA-8 / DSM 12333 / CCUG 43141 / JCM 11478 / NBRC 16432 / NCIMB 13614 / HKI 0122)).